The primary structure comprises 451 residues: Glycine--tRNA ligase (451 aa).

Positions 94 and 164 each coordinate substrate. ATP-binding positions include 196–198 (RNE), 206–211 (FRTREF), 281–282 (EL), and 325–328 (GVER). 211 to 215 (FEQME) contacts substrate. 321–325 (EPSVG) contacts substrate.

The protein belongs to the class-II aminoacyl-tRNA synthetase family. As to quaternary structure, homodimer.

It localises to the cytoplasm. It catalyses the reaction tRNA(Gly) + glycine + ATP = glycyl-tRNA(Gly) + AMP + diphosphate. Its function is as follows. Catalyzes the attachment of glycine to tRNA(Gly). This chain is Glycine--tRNA ligase, found in Mesoplasma florum (strain ATCC 33453 / NBRC 100688 / NCTC 11704 / L1) (Acholeplasma florum).